The primary structure comprises 207 residues: Fibroblast growth factor 18 (207 aa).

The first 27 residues, 1–27 (MYSAPSACTCLCLHFLLLCFQVQVLVA), serve as a signal peptide directing secretion. N-linked (GlcNAc...) asparagine glycosylation occurs at Asn-39. Cysteines 109 and 127 form a disulfide. Asn-137 carries an N-linked (GlcNAc...) asparagine glycan. The disordered stretch occupies residues 157 to 186 (GRPRKGPKTRENQQDVHFMKRYPKGQPELQ). Positions 164-174 (KTRENQQDVHF) are enriched in basic and acidic residues.

This sequence belongs to the heparin-binding growth factors family. As to quaternary structure, interacts with FGFR3 and FGFR4.

It localises to the secreted. Plays an important role in the regulation of cell proliferation, cell differentiation and cell migration. Required for normal ossification and bone development. Stimulates hepatic and intestinal proliferation. The protein is Fibroblast growth factor 18 (FGF18) of Homo sapiens (Human).